The following is a 289-amino-acid chain: Protease HtpX (289 aa).

A run of 2 helical transmembrane segments spans residues 7-27 (LFLL…NIIF) and 38-58 (GGIL…SLFM). Residue histidine 144 participates in Zn(2+) binding. Glutamate 145 is a catalytic residue. Histidine 148 is a Zn(2+) binding site. The next 2 helical transmembrane spans lie at 155–175 (VTMT…SRII) and 194–214 (LVFW…ATMI). Glutamate 223 is a Zn(2+) binding site.

The protein belongs to the peptidase M48B family. Zn(2+) is required as a cofactor.

It localises to the cell inner membrane. The sequence is that of Protease HtpX from Actinobacillus pleuropneumoniae serotype 5b (strain L20).